Reading from the N-terminus, the 404-residue chain is L-cysteine:1D-myo-inositol 2-amino-2-deoxy-alpha-D-glucopyranoside ligase 1 (404 aa).

Residue Cys47 participates in Zn(2+) binding. Residues 47–50 (CGIT), Thr62, and 85–87 (NIT) each bind L-cysteinyl-5'-AMP. Positions 49-59 (ITPYDSTHLGH) match the 'HIGH' region motif. The short motif at 188–193 (ERGGDP) is the 'ERGGDP' region element. Trp228 serves as a coordination point for L-cysteinyl-5'-AMP. Residue Cys232 participates in Zn(2+) binding. Residue 250 to 252 (GSD) participates in L-cysteinyl-5'-AMP binding. Zn(2+) is bound at residue His257. Ile284 contributes to the L-cysteinyl-5'-AMP binding site. A 'KMSKS' region motif is present at residues 290–294 (KMSKS).

Belongs to the class-I aminoacyl-tRNA synthetase family. MshC subfamily. As to quaternary structure, monomer. It depends on Zn(2+) as a cofactor.

The enzyme catalyses 1D-myo-inositol 2-amino-2-deoxy-alpha-D-glucopyranoside + L-cysteine + ATP = 1D-myo-inositol 2-(L-cysteinylamino)-2-deoxy-alpha-D-glucopyranoside + AMP + diphosphate + H(+). Functionally, catalyzes the ATP-dependent condensation of GlcN-Ins and L-cysteine to form L-Cys-GlcN-Ins. The protein is L-cysteine:1D-myo-inositol 2-amino-2-deoxy-alpha-D-glucopyranoside ligase 1 of Corynebacterium urealyticum (strain ATCC 43042 / DSM 7109).